The primary structure comprises 201 residues: Protease (201 aa).

Catalysis depends on residues His55, Asp72, and Cys122.

Belongs to the peptidase C5 family. In terms of assembly, interacts with protease cofactor pVI-C; this interaction is necessary for protease activation.

It is found in the virion. Its subcellular location is the host nucleus. It carries out the reaction Cleaves proteins of the adenovirus and its host cell at two consensus sites: -Yaa-Xaa-Gly-Gly-|-Xaa- and -Yaa-Xaa-Gly-Xaa-|-Gly- (in which Yaa is Met, Ile or Leu, and Xaa is any amino acid).. Its activity is regulated as follows. Requires DNA and protease cofactor for maximal activation. Inside nascent virions, becomes partially activated by binding to the viral DNA, allowing it to cleave the cofactor that binds to the protease and fully activates it. Actin, like the viral protease cofactor, seems to act as a cofactor in the cleavage of cytokeratin 18 and of actin itself. Functionally, cleaves viral precursor proteins (pTP, pIIIa, pVI, pVII, pVIII, and pX) inside newly assembled particles giving rise to mature virions. Protease complexed to its cofactor slides along the viral DNA to specifically locate and cleave the viral precursors. Mature virions have a weakened organization compared to the unmature virions, thereby facilitating subsequent uncoating. Without maturation, the particle lacks infectivity and is unable to uncoat. Late in adenovirus infection, in the cytoplasm, may participate in the cytoskeleton destruction. Cleaves host cell cytoskeletal keratins K7 and K18. The chain is Protease from Bovine adenovirus 4 (BAdV-4).